A 194-amino-acid polypeptide reads, in one-letter code: Translation machinery-associated protein 22 (194 aa).

An SUI1 domain is found at 102-173 (VQIKRVERNK…DVQDWLLEVY (72 aa)).

Belongs to the DENR family. Interacts with the 40S ribosomal subunit.

Its subcellular location is the cytoplasm. The sequence is that of Translation machinery-associated protein 22 (tma22) from Aspergillus oryzae (strain ATCC 42149 / RIB 40) (Yellow koji mold).